The sequence spans 381 residues: Homoserine O-succinyltransferase (381 aa).

The 316-residue stretch at 45 to 360 (NAVLVCHALN…PHGHDAFLLD (316 aa)) folds into the AB hydrolase-1 domain. The active-site Nucleophile is Ser-151. Arg-221 lines the substrate pocket. Residues Asp-321 and His-354 contribute to the active site. A substrate-binding site is contributed by Asp-355.

This sequence belongs to the AB hydrolase superfamily. MetX family. In terms of assembly, homodimer.

The protein resides in the cytoplasm. The enzyme catalyses L-homoserine + succinyl-CoA = O-succinyl-L-homoserine + CoA. It participates in amino-acid biosynthesis; L-methionine biosynthesis via de novo pathway; O-succinyl-L-homoserine from L-homoserine: step 1/1. Functionally, transfers a succinyl group from succinyl-CoA to L-homoserine, forming succinyl-L-homoserine. The chain is Homoserine O-succinyltransferase from Paraburkholderia phymatum (strain DSM 17167 / CIP 108236 / LMG 21445 / STM815) (Burkholderia phymatum).